Here is a 396-residue protein sequence, read N- to C-terminus: MLRVGPGSLAITGGSRLLGHRVGSECCPFHLDCSLLEKQSAAPGQEGSADSHGSDKILAAAFSPSGEYFALTDDNKRLVLFRTKPAWEKISVRWVSRRCTALTFSPCGNHILVADKSGDVFSFSVPRALEQGRLELGHLSMLLDVTVSLDGKHIITCDRDEKIRVSCWGAPHVIMSFCLGHTEFVSQLLPLPGQEKLLLSGSGDGTLRLWEYESGKEVHSVTLRSLAHELEDQENKRFAVSRISCCSCNGIQLAVLCEGVPGIFLFSVSPEPRLTFTQYIALTHTPIDLDFDGSAFLWVLSGVREEPLLKYKELDDQWQSVSNDEELTRLTGIIQENWGDLEGAGAPESRFVGLYKAVFDNMATYLQKKELRLESEKRKAADGQVVLASKVQKTES.

WD repeat units lie at residues 52–91 (HGSD…EKIS), 94–133 (WVSR…EQGR), 137–178 (GHLS…MSFC), and 180–220 (GHTE…EVHS).

This sequence belongs to the WD repeat TRM82 family. Non-catalytic component of the METTL1-WDR4 complex, composed of mettl1 and wdr4.

It localises to the nucleus. It functions in the pathway tRNA modification; N(7)-methylguanine-tRNA biosynthesis. Non-catalytic component of the METTL1-WDR4 methyltransferase complex required for the formation of N(7)-methylguanine in a subset of RNA species, such as tRNAs, mRNAs and microRNAs (miRNAs). In the METTL1-WDR4 methyltransferase complex, wdr4 acts as a scaffold for tRNA-binding. Required for the formation of N(7)-methylguanine at position 46 (m7G46) in a large subset of tRNAs that contain the 5'-RAGGU-3' motif within the variable loop. M7G46 interacts with C13-G22 in the D-loop to stabilize tRNA tertiary structure and protect tRNAs from decay. Also required for the formation of N(7)-methylguanine at internal sites in a subset of mRNAs. Also required for methylation of a specific subset of miRNAs. The chain is tRNA (guanine-N(7)-)-methyltransferase non-catalytic subunit wdr4 (wdr4) from Xenopus laevis (African clawed frog).